A 98-amino-acid polypeptide reads, in one-letter code: Aspartyl/glutamyl-tRNA(Asn/Gln) amidotransferase subunit C (98 aa).

This sequence belongs to the GatC family. Heterotrimer of A, B and C subunits.

It carries out the reaction L-glutamyl-tRNA(Gln) + L-glutamine + ATP + H2O = L-glutaminyl-tRNA(Gln) + L-glutamate + ADP + phosphate + H(+). The catalysed reaction is L-aspartyl-tRNA(Asn) + L-glutamine + ATP + H2O = L-asparaginyl-tRNA(Asn) + L-glutamate + ADP + phosphate + 2 H(+). In terms of biological role, allows the formation of correctly charged Asn-tRNA(Asn) or Gln-tRNA(Gln) through the transamidation of misacylated Asp-tRNA(Asn) or Glu-tRNA(Gln) in organisms which lack either or both of asparaginyl-tRNA or glutaminyl-tRNA synthetases. The reaction takes place in the presence of glutamine and ATP through an activated phospho-Asp-tRNA(Asn) or phospho-Glu-tRNA(Gln). The protein is Aspartyl/glutamyl-tRNA(Asn/Gln) amidotransferase subunit C of Roseiflexus castenholzii (strain DSM 13941 / HLO8).